We begin with the raw amino-acid sequence, 208 residues long: ATP phosphoribosyltransferase (208 aa).

This sequence belongs to the ATP phosphoribosyltransferase family. Short subfamily. Heteromultimer composed of HisG and HisZ subunits.

It localises to the cytoplasm. The enzyme catalyses 1-(5-phospho-beta-D-ribosyl)-ATP + diphosphate = 5-phospho-alpha-D-ribose 1-diphosphate + ATP. It participates in amino-acid biosynthesis; L-histidine biosynthesis; L-histidine from 5-phospho-alpha-D-ribose 1-diphosphate: step 1/9. Its function is as follows. Catalyzes the condensation of ATP and 5-phosphoribose 1-diphosphate to form N'-(5'-phosphoribosyl)-ATP (PR-ATP). Has a crucial role in the pathway because the rate of histidine biosynthesis seems to be controlled primarily by regulation of HisG enzymatic activity. The polypeptide is ATP phosphoribosyltransferase (Clostridioides difficile (strain 630) (Peptoclostridium difficile)).